The following is a 32-amino-acid chain: MSDIN-like toxin proprotein 1 (32 aa).

Positions Met-1 to Pro-10 are excised as a propeptide. Positions Gly-11–Pro-18 form a cross-link, cyclopeptide (Gly-Pro). The propeptide occupies Cys-19–Glu-32.

The protein belongs to the MSDIN fungal toxin family. In terms of processing, processed by the macrocyclase-peptidase enzyme POPB to yield a toxic cyclic octapeptide. POPB first removes 10 residues from the N-terminus. Conformational trapping of the remaining peptide forces the enzyme to release this intermediate rather than proceed to macrocyclization. The enzyme rebinds the remaining peptide in a different conformation and catalyzes macrocyclization of the N-terminal 8 residues.

Functionally, probable toxin that belongs to the MSDIN-like toxin family responsible for a large number of food poisoning cases and deaths. This Amanita bisporigera (Destroying angel) protein is MSDIN-like toxin proprotein 1.